The sequence spans 471 residues: Glutamate--tRNA ligase (471 aa).

The 'HIGH' region motif lies at 9 to 19 (PSPTGYLHVGG). Positions 98, 100, 125, and 127 each coordinate Zn(2+). The 'KMSKS' region signature appears at 237–241 (KLSKR). Residue lysine 240 coordinates ATP.

Belongs to the class-I aminoacyl-tRNA synthetase family. Glutamate--tRNA ligase type 1 subfamily. Monomer. Zn(2+) is required as a cofactor.

It localises to the cytoplasm. The catalysed reaction is tRNA(Glu) + L-glutamate + ATP = L-glutamyl-tRNA(Glu) + AMP + diphosphate. Functionally, catalyzes the attachment of glutamate to tRNA(Glu) in a two-step reaction: glutamate is first activated by ATP to form Glu-AMP and then transferred to the acceptor end of tRNA(Glu). This chain is Glutamate--tRNA ligase, found in Yersinia pestis.